The sequence spans 164 residues: Protein-export protein SecB (164 aa).

Positions 1–12 (MPDKDEITHDAQ) are enriched in basic and acidic residues. The segment at 1-22 (MPDKDEITHDAQSENEESLPLA) is disordered.

The protein belongs to the SecB family. As to quaternary structure, homotetramer, a dimer of dimers. One homotetramer interacts with 1 SecA dimer.

It is found in the cytoplasm. In terms of biological role, one of the proteins required for the normal export of preproteins out of the cell cytoplasm. It is a molecular chaperone that binds to a subset of precursor proteins, maintaining them in a translocation-competent state. It also specifically binds to its receptor SecA. This is Protein-export protein SecB from Neorickettsia sennetsu (strain ATCC VR-367 / Miyayama) (Ehrlichia sennetsu).